The sequence spans 270 residues: UPF0354 protein BC_4690 (270 aa).

It belongs to the UPF0354 family.

The sequence is that of UPF0354 protein BC_4690 from Bacillus cereus (strain ATCC 14579 / DSM 31 / CCUG 7414 / JCM 2152 / NBRC 15305 / NCIMB 9373 / NCTC 2599 / NRRL B-3711).